A 169-amino-acid polypeptide reads, in one-letter code: MLEYLIVGQLINTHGVKGELKATSQTDDPQRFKKLKWVYIDKNGSLEKYDINGVKFFKQFIIIKFQGVDSIEEAEKLKGFYIKVDRANAVKLPENSFFISDIIGLKVYDENNQLLGELKDVIQTGSNDVYVVRDSDSKEILIPALKSVVKEVSIEEGKISVILPKGLLD.

Residues 93 to 167 (PENSFFISDI…KISVILPKGL (75 aa)) form the PRC barrel domain.

It belongs to the RimM family. In terms of assembly, binds ribosomal protein uS19.

The protein resides in the cytoplasm. An accessory protein needed during the final step in the assembly of 30S ribosomal subunit, possibly for assembly of the head region. Essential for efficient processing of 16S rRNA. May be needed both before and after RbfA during the maturation of 16S rRNA. It has affinity for free ribosomal 30S subunits but not for 70S ribosomes. This is Ribosome maturation factor RimM from Ruminiclostridium cellulolyticum (strain ATCC 35319 / DSM 5812 / JCM 6584 / H10) (Clostridium cellulolyticum).